The following is a 333-amino-acid chain: 5-formaminoimidazole-4-carboxamide-1-(beta)-D-ribofuranosyl 5'-monophosphate synthetase (333 aa).

5-amino-1-(5-phospho-beta-D-ribosyl)imidazole-4-carboxamide is bound by residues histidine 10 and serine 74. Residues 95 to 324 (RNLFAWESNQ…ISREIRLALN (230 aa)) enclose the ATP-grasp domain. ATP is bound by residues 125 to 185 (VEDV…VPMY) and glutamate 207. Asparagine 230 contributes to the 5-amino-1-(5-phospho-beta-D-ribosyl)imidazole-4-carboxamide binding site. The Mg(2+) site is built by glutamate 269 and glutamate 282.

It belongs to the phosphohexose mutase family. The cofactor is Mg(2+). It depends on Mn(2+) as a cofactor.

The catalysed reaction is 5-amino-1-(5-phospho-beta-D-ribosyl)imidazole-4-carboxamide + formate + ATP = 5-formamido-1-(5-phospho-D-ribosyl)imidazole-4-carboxamide + ADP + phosphate. Its pathway is purine metabolism; IMP biosynthesis via de novo pathway; 5-formamido-1-(5-phospho-D-ribosyl)imidazole-4-carboxamide from 5-amino-1-(5-phospho-D-ribosyl)imidazole-4-carboxamide (formate route): step 1/1. Functionally, catalyzes the ATP- and formate-dependent formylation of 5-aminoimidazole-4-carboxamide-1-beta-d-ribofuranosyl 5'-monophosphate (AICAR) to 5-formaminoimidazole-4-carboxamide-1-beta-d-ribofuranosyl 5'-monophosphate (FAICAR) in the absence of folates. The chain is 5-formaminoimidazole-4-carboxamide-1-(beta)-D-ribofuranosyl 5'-monophosphate synthetase from Sulfolobus acidocaldarius (strain ATCC 33909 / DSM 639 / JCM 8929 / NBRC 15157 / NCIMB 11770).